The primary structure comprises 872 residues: Chaperone protein ClpB 2 (872 aa).

The Clp R domain occupies proline 6–threonine 148. Repeat regions lie at residues phenylalanine 9–glutamine 73 and leucine 85–threonine 148. The tract at residues glutamate 161–glutamate 342 is NBD1. Glycine 208 to threonine 215 contacts ATP. The linker stretch occupies residues proline 343–glycine 551. The stretch at isoleucine 393 to threonine 527 forms a coiled coil. An NBD2 region spans residues glutamate 561–glycine 772. Glycine 611–threonine 618 serves as a coordination point for ATP. The interval leucine 773–valine 872 is C-terminal.

It belongs to the ClpA/ClpB family. Homohexamer. The oligomerization is ATP-dependent.

The protein localises to the cytoplasm. In terms of biological role, part of a stress-induced multi-chaperone system, it is involved in the recovery of the cell from heat-induced damage, in cooperation with DnaK, DnaJ and GrpE. Acts before DnaK, in the processing of protein aggregates. Protein binding stimulates the ATPase activity; ATP hydrolysis unfolds the denatured protein aggregates, which probably helps expose new hydrophobic binding sites on the surface of ClpB-bound aggregates, contributing to the solubilization and refolding of denatured protein aggregates by DnaK. The sequence is that of Chaperone protein ClpB 2 (clpB2) from Synechocystis sp. (strain ATCC 27184 / PCC 6803 / Kazusa).